We begin with the raw amino-acid sequence, 93 residues long: Cytochrome c (93 aa).

Low complexity predominate over residues 1–13 (AALPPGDAAAAQG). Residues 1 to 21 (AALPPGDAAAAQGGSNGVGPN) form a disordered region. Residue methionine 70 participates in heme c binding.

The protein belongs to the cytochrome c family. Post-translationally, binds 1 heme c group covalently per subunit.

The protein localises to the mitochondrion intermembrane space. Its function is as follows. Electron carrier protein. The oxidized form of the cytochrome c heme group can accept an electron from the heme group of the cytochrome c1 subunit of cytochrome reductase. Cytochrome c then transfers this electron to the cytochrome oxidase complex, the final protein carrier in the mitochondrial electron-transport chain. The protein is Cytochrome c of Trypanosoma brucei brucei.